Here is a 335-residue protein sequence, read N- to C-terminus: Ketol-acid reductoisomerase (NADP(+)) 2 (335 aa).

The region spanning 1-180 (MKTYYEKDAN…GCTRAGVIET (180 aa)) is the KARI N-terminal Rossmann domain. NADP(+) is bound by residues 24–27 (YGSQ), R47, S51, and 81–84 (DEQQ). Residue H106 is part of the active site. G132 contacts NADP(+). Residues 181 to 326 (TFQEETETDL…AELREMMSWI (146 aa)) form the KARI C-terminal knotted domain. 4 residues coordinate Mg(2+): D189, E193, E225, and E229. S250 is a substrate binding site.

The protein belongs to the ketol-acid reductoisomerase family. It depends on Mg(2+) as a cofactor.

The catalysed reaction is (2R)-2,3-dihydroxy-3-methylbutanoate + NADP(+) = (2S)-2-acetolactate + NADPH + H(+). It carries out the reaction (2R,3R)-2,3-dihydroxy-3-methylpentanoate + NADP(+) = (S)-2-ethyl-2-hydroxy-3-oxobutanoate + NADPH + H(+). It participates in amino-acid biosynthesis; L-isoleucine biosynthesis; L-isoleucine from 2-oxobutanoate: step 2/4. It functions in the pathway amino-acid biosynthesis; L-valine biosynthesis; L-valine from pyruvate: step 2/4. Involved in the biosynthesis of branched-chain amino acids (BCAA). Catalyzes an alkyl-migration followed by a ketol-acid reduction of (S)-2-acetolactate (S2AL) to yield (R)-2,3-dihydroxy-isovalerate. In the isomerase reaction, S2AL is rearranged via a Mg-dependent methyl migration to produce 3-hydroxy-3-methyl-2-ketobutyrate (HMKB). In the reductase reaction, this 2-ketoacid undergoes a metal-dependent reduction by NADPH to yield (R)-2,3-dihydroxy-isovalerate. The chain is Ketol-acid reductoisomerase (NADP(+)) 2 from Bacillus cereus (strain ZK / E33L).